Here is a 323-residue protein sequence, read N- to C-terminus: Methenyltetrahydromethanopterin cyclohydrolase (323 aa).

The protein belongs to the MCH family.

It localises to the cytoplasm. It carries out the reaction 5,10-methenyl-5,6,7,8-tetrahydromethanopterin + H2O = N(5)-formyl-5,6,7,8-tetrahydromethanopterin + H(+). Its pathway is one-carbon metabolism; methanogenesis from CO(2); 5,10-methenyl-5,6,7,8-tetrahydromethanopterin from CO(2): step 3/3. Functionally, catalyzes the reversible interconversion of 5-formyl-H(4)MPT to methenyl-H(4)MPT(+). The protein is Methenyltetrahydromethanopterin cyclohydrolase of Methanobrevibacter smithii (strain ATCC 35061 / DSM 861 / OCM 144 / PS).